A 193-amino-acid chain; its full sequence is Bcl-2-like protein 2 (193 aa).

The residue at position 2 (A2) is an N-acetylalanine. The BH4 motif lies at 9–29 (DTRALVADFVGYKLRQKGYVC). A BH1 motif is present at residues 85 to 104 (ELFQGGPNWGRLVAFFVFGA). The BH2 motif lies at 136–151 (DWIHSSGGWAEFTALY).

Belongs to the Bcl-2 family. As to quaternary structure, interacts with HIF3A isoform 2 (via C-terminus domain). Interacts with BOP. In terms of tissue distribution, expressed in almost all myeloid cell lines and in a wide range of tissues, with highest levels in brain, colon, and salivary gland.

The protein resides in the mitochondrion membrane. Functionally, promotes cell survival. Blocks dexamethasone-induced apoptosis. Mediates survival of postmitotic Sertoli cells by suppressing death-promoting activity of BAX. The protein is Bcl-2-like protein 2 (Bcl2l2) of Mus musculus (Mouse).